The chain runs to 545 residues: Chaperonin GroEL (545 aa).

ATP-binding positions include 29-32 (TLGP), lysine 50, 86-90 (DGTTT), glycine 415, and aspartate 495.

Belongs to the chaperonin (HSP60) family. As to quaternary structure, forms a cylinder of 14 subunits composed of two heptameric rings stacked back-to-back. Interacts with the co-chaperonin GroES.

It is found in the cytoplasm. The enzyme catalyses ATP + H2O + a folded polypeptide = ADP + phosphate + an unfolded polypeptide.. Together with its co-chaperonin GroES, plays an essential role in assisting protein folding. The GroEL-GroES system forms a nano-cage that allows encapsulation of the non-native substrate proteins and provides a physical environment optimized to promote and accelerate protein folding. This Bacteroides fragilis (strain ATCC 25285 / DSM 2151 / CCUG 4856 / JCM 11019 / LMG 10263 / NCTC 9343 / Onslow / VPI 2553 / EN-2) protein is Chaperonin GroEL.